We begin with the raw amino-acid sequence, 589 residues long: MKTGAQVWRALAKSCLLCAALGCLHLPGARGEKPDFFETNAVNGSLVRSRPVRSVDVTPAPTDCQLSTWSSWTACDPCQKKRYRHTYLLRPSQFYGELCDFSDKEVEDCVTNRACRSQVRCEGFVCAQTGRCVNRRLLCNGDNDCGDQSDEANCRRIYKKCSQDMEQYWAIGNLASGINLFTNTFEGPVLDHRYYAGACSPHYILNTNFRKPYNVESYTPQTQGKYEFALTEYESYFDFEHNVTEKATSKSSFKFGFKLDGLVEFGVRKESNEGRHYISRTKRFSHTKSKFLHARSVLEVAHYKLKSRQLMLHYEFLQRVKSLPLEYSYGEYRDLLRDFGTHFITEAVLGGIYEYTLIMNKDAMERGDYTLDHVSACAGGGFQIGGNVYKVYLKLGVSEKKCSDILNEIKDRNKRRTMVEDLVVLVRGGTSEYITSLAYKDLPTAELMKEWGDAVQYNPAIIKLKAEPLYELVTATDFAYSSTVKQNMKKALEEFQMEVSSCRCAPCRNNGVPILKESRCECICPAGFQGVACEVTNRKDIPIDGKWSCWSDWSPCSGGRKTRQRQCNNPAPQRGGSPCSGPASETLDC.

The N-terminal stretch at 1 to 31 (MKTGAQVWRALAKSCLLCAALGCLHLPGARG) is a signal peptide. A propeptide spanning residues 32 to 53 (EKPDFFETNAVNGSLVRSRPVR) is cleaved from the precursor. N-linked (GlcNAc...) asparagine glycosylation occurs at Asn43. Residues 63 to 116 (DCQLSTWSSWTACDPCQKKRYRHTYLLRPSQFYGELCDFSDKEVEDCVTNRACR) form the TSP type-1 1 domain. 7 disulfide bridges follow: Cys64-Cys99, Cys75-Cys109, Cys78-Cys115, Cys121-Cys132, Cys126-Cys145, Cys139-Cys154, and Cys161-Cys199. Residues Trp69 and Trp72 are each glycosylated (C-linked (Man) tryptophan). The LDL-receptor class A domain occupies 120-155 (RCEGFVCAQTGRCVNRRLLCNGDNDCGDQSDEANCR). Leu137, Asn140, Asp142, Asp144, Asp150, and Glu151 together coordinate Ca(2+). The 347-residue stretch at 157 to 503 (IYKKCSQDME…EFQMEVSSCR (347 aa)) folds into the MACPF domain. Asn242 carries N-linked (GlcNAc...) asparagine glycosylation. Transmembrane regions (beta stranded) follow at residues 251–258 (SSFKFGFK), 261–268 (GLVEFGVR), 378–385 (AGGGFQIG), and 391–398 (VYLKLGVS). The cysteines at positions 377 and 402 are disulfide-linked. Thr417 is modified (phosphothreonine). 4 disulfides stabilise this stretch: Cys502-Cys549, Cys504-Cys520, Cys507-Cys522, and Cys524-Cys533. The EGF-like domain maps to 504–534 (CAPCRNNGVPILKESRCECICPAGFQGVACE). A TSP type-1 2 domain is found at 544–587 (DGKWSCWSDWSPCSGGRKTRQRQCNNPAPQRGGSPCSGPASETL). Residues Trp550 and Trp553 are each glycosylated (C-linked (Man) tryptophan). Cysteines 556 and 589 form a disulfide. The disordered stretch occupies residues 556-589 (CSGGRKTRQRQCNNPAPQRGGSPCSGPASETLDC).

Belongs to the complement C6/C7/C8/C9 family. Heterotrimer of 3 chains: alpha (C8A), beta (C8B) and gamma (C8G); the alpha and gamma chains are disulfide bonded. Component of the membrane attack complex (MAC), composed of complement C5b, C6, C7, C8A, C8B, C8G and multiple copies of the pore-forming subunit C9. Post-translationally, N-glycosylated; contains one or two bound glycans. Not O-glycosylated.

The protein localises to the secreted. It is found in the target cell membrane. Its activity is regulated as follows. Membrane attack complex (MAC) assembly is inhibited by CD59, thereby protecting self-cells from damage during complement activation. CD59 acts by binding to the beta-haipins of C8 (C8A and C8B), forming an intermolecular beta-sheet that prevents incorporation of the multiple copies of C9 required for complete formation of the osmolytic pore. MAC assembly is also inhibited by clusterin (CLU) chaperones that inhibit polymerization of C9. Functionally, component of the membrane attack complex (MAC), a multiprotein complex activated by the complement cascade, which inserts into a target cell membrane and forms a pore, leading to target cell membrane rupture and cell lysis. The MAC is initiated by proteolytic cleavage of C5 into complement C5b in response to the classical, alternative, lectin and GZMK complement pathways. The complement pathways consist in a cascade of proteins that leads to phagocytosis and breakdown of pathogens and signaling that strengthens the adaptive immune system. C8B, together with C8A and C8G, inserts into the target membrane, but does not form pores by itself. During MAC assembly, associates with C5b, C6 and C7 to form the C5b8 intermediate complex that inserts into the target membrane and traverses the bilayer increasing membrane rigidity. The protein is Complement component C8 beta chain (C8b) of Rattus norvegicus (Rat).